The following is a 181-amino-acid chain: ATP synthase subunit delta (181 aa).

The protein belongs to the ATPase delta chain family. F-type ATPases have 2 components, F(1) - the catalytic core - and F(0) - the membrane proton channel. F(1) has five subunits: alpha(3), beta(3), gamma(1), delta(1), epsilon(1). F(0) has three main subunits: a(1), b(2) and c(10-14). The alpha and beta chains form an alternating ring which encloses part of the gamma chain. F(1) is attached to F(0) by a central stalk formed by the gamma and epsilon chains, while a peripheral stalk is formed by the delta and b chains.

It is found in the cell membrane. In terms of biological role, f(1)F(0) ATP synthase produces ATP from ADP in the presence of a proton or sodium gradient. F-type ATPases consist of two structural domains, F(1) containing the extramembraneous catalytic core and F(0) containing the membrane proton channel, linked together by a central stalk and a peripheral stalk. During catalysis, ATP synthesis in the catalytic domain of F(1) is coupled via a rotary mechanism of the central stalk subunits to proton translocation. Functionally, this protein is part of the stalk that links CF(0) to CF(1). It either transmits conformational changes from CF(0) to CF(1) or is implicated in proton conduction. The polypeptide is ATP synthase subunit delta (Lacticaseibacillus casei (strain BL23) (Lactobacillus casei)).